Here is a 437-residue protein sequence, read N- to C-terminus: Glutamyl-tRNA reductase (437 aa).

Substrate-binding positions include 49 to 52, serine 109, 114 to 116, and glutamine 120; these read TCNR and ETQ. The Nucleophile role is filled by cysteine 50. 189–194 contributes to the NADP(+) binding site; it reads GAGKMS.

The protein belongs to the glutamyl-tRNA reductase family. In terms of assembly, homodimer.

It catalyses the reaction (S)-4-amino-5-oxopentanoate + tRNA(Glu) + NADP(+) = L-glutamyl-tRNA(Glu) + NADPH + H(+). It functions in the pathway porphyrin-containing compound metabolism; protoporphyrin-IX biosynthesis; 5-aminolevulinate from L-glutamyl-tRNA(Glu): step 1/2. In terms of biological role, catalyzes the NADPH-dependent reduction of glutamyl-tRNA(Glu) to glutamate 1-semialdehyde (GSA). In Paenibacillus macerans (Bacillus macerans), this protein is Glutamyl-tRNA reductase.